The sequence spans 140 residues: Neuropeptide CCHamide-2 (140 aa).

An N-terminal signal peptide occupies residues 1–22; the sequence is MAQMYLAVTIIALLAISHGVSA. Residues Cys-26 and Cys-33 are joined by a disulfide bond. Position 37 is a histidine amide (His-37). The propeptide occupies 41–140; sequence SGDTSAMDQL…PDDGYYIESL (100 aa).

In terms of tissue distribution, expressed in corpora cardiaca (CC), corpora allata (CA), antennal lobe (AL) and gnathal ganglion (GNG) (at protein level). Expression detected in few animals (at protein level).

It localises to the secreted. Functionally, ligand for the CCHamide-2 receptor CCHa2-R. The protein is Neuropeptide CCHamide-2 of Agrotis ipsilon (Black cutworm moth).